A 133-amino-acid chain; its full sequence is ATP synthase epsilon chain (133 aa).

It belongs to the ATPase epsilon chain family. In terms of assembly, F-type ATPases have 2 components, CF(1) - the catalytic core - and CF(0) - the membrane proton channel. CF(1) has five subunits: alpha(3), beta(3), gamma(1), delta(1), epsilon(1). CF(0) has three main subunits: a, b and c.

Its subcellular location is the cellular thylakoid membrane. Functionally, produces ATP from ADP in the presence of a proton gradient across the membrane. The sequence is that of ATP synthase epsilon chain from Prochlorococcus marinus (strain MIT 9303).